The primary structure comprises 208 residues: Glycerol-3-phosphate acyltransferase (208 aa).

Transmembrane regions (helical) follow at residues 7 to 27 (PNIHFYLLAYFIGGIPFGYLL), 63 to 83 (MMAALTMLLDALKGALVILVA), 86 to 106 (AGMSVETQWAIAVLAVVGHCF), 123 to 143 (GVMAVMLPLEAAIGLVVWLVV), 149 to 169 (ISSLSSLLGLGALLISSFLIH), and 170 to 190 (PEIPEIGTHAPLLIIAFVIFY).

It belongs to the PlsY family. In terms of assembly, probably interacts with PlsX.

It is found in the cell inner membrane. The catalysed reaction is an acyl phosphate + sn-glycerol 3-phosphate = a 1-acyl-sn-glycero-3-phosphate + phosphate. It participates in lipid metabolism; phospholipid metabolism. Catalyzes the transfer of an acyl group from acyl-phosphate (acyl-PO(4)) to glycerol-3-phosphate (G3P) to form lysophosphatidic acid (LPA). This enzyme utilizes acyl-phosphate as fatty acyl donor, but not acyl-CoA or acyl-ACP. This Wolinella succinogenes (strain ATCC 29543 / DSM 1740 / CCUG 13145 / JCM 31913 / LMG 7466 / NCTC 11488 / FDC 602W) (Vibrio succinogenes) protein is Glycerol-3-phosphate acyltransferase.